Here is a 240-residue protein sequence, read N- to C-terminus: Triosephosphate isomerase (240 aa).

6-8 (NLK) provides a ligand contact to substrate. The Electrophile role is filled by His-88. Residue Glu-157 is the Proton acceptor of the active site. Gly-163 and Ser-193 together coordinate substrate.

Belongs to the triosephosphate isomerase family. As to quaternary structure, homodimer.

The protein resides in the cytoplasm. The catalysed reaction is D-glyceraldehyde 3-phosphate = dihydroxyacetone phosphate. Its pathway is carbohydrate biosynthesis; gluconeogenesis. The protein operates within carbohydrate degradation; glycolysis; D-glyceraldehyde 3-phosphate from glycerone phosphate: step 1/1. Functionally, involved in the gluconeogenesis. Catalyzes stereospecifically the conversion of dihydroxyacetone phosphate (DHAP) to D-glyceraldehyde-3-phosphate (G3P). The sequence is that of Triosephosphate isomerase from Sulfurimonas denitrificans (strain ATCC 33889 / DSM 1251) (Thiomicrospira denitrificans (strain ATCC 33889 / DSM 1251)).